A 365-amino-acid chain; its full sequence is tRNA N6-adenosine threonylcarbamoyltransferase (365 aa).

Histidine 111 and histidine 115 together coordinate Fe cation. Residues 140–144 (IVSGG), aspartate 173, glycine 186, and asparagine 298 contribute to the substrate site. Residue aspartate 323 participates in Fe cation binding.

It belongs to the KAE1 / TsaD family. It depends on Fe(2+) as a cofactor.

It localises to the cytoplasm. The enzyme catalyses L-threonylcarbamoyladenylate + adenosine(37) in tRNA = N(6)-L-threonylcarbamoyladenosine(37) in tRNA + AMP + H(+). Required for the formation of a threonylcarbamoyl group on adenosine at position 37 (t(6)A37) in tRNAs that read codons beginning with adenine. Is involved in the transfer of the threonylcarbamoyl moiety of threonylcarbamoyl-AMP (TC-AMP) to the N6 group of A37, together with TsaE and TsaB. TsaD likely plays a direct catalytic role in this reaction. The protein is tRNA N6-adenosine threonylcarbamoyltransferase of Thermomicrobium roseum (strain ATCC 27502 / DSM 5159 / P-2).